The sequence spans 309 residues: Glutaminase (309 aa).

Residues Ser-65, Asn-117, Glu-162, Asn-169, Tyr-193, Tyr-245, and Val-263 each contribute to the substrate site.

It belongs to the glutaminase family. As to quaternary structure, homotetramer.

It carries out the reaction L-glutamine + H2O = L-glutamate + NH4(+). This is Glutaminase from Clostridioides difficile (strain 630) (Peptoclostridium difficile).